The chain runs to 337 residues: Aspartate carbamoyltransferase catalytic subunit (337 aa).

Residues Arg-59 and Thr-60 each coordinate carbamoyl phosphate. L-aspartate is bound at residue Lys-87. Carbamoyl phosphate is bound by residues Arg-109, His-142, and Gln-145. Residues Arg-182 and Arg-253 each contribute to the L-aspartate site. Carbamoyl phosphate is bound by residues Gly-294 and Pro-295.

It belongs to the aspartate/ornithine carbamoyltransferase superfamily. ATCase family. Heterododecamer (2C3:3R2) of six catalytic PyrB chains organized as two trimers (C3), and six regulatory PyrI chains organized as three dimers (R2).

It catalyses the reaction carbamoyl phosphate + L-aspartate = N-carbamoyl-L-aspartate + phosphate + H(+). It participates in pyrimidine metabolism; UMP biosynthesis via de novo pathway; (S)-dihydroorotate from bicarbonate: step 2/3. Catalyzes the condensation of carbamoyl phosphate and aspartate to form carbamoyl aspartate and inorganic phosphate, the committed step in the de novo pyrimidine nucleotide biosynthesis pathway. In Prochlorococcus marinus (strain MIT 9211), this protein is Aspartate carbamoyltransferase catalytic subunit.